A 423-amino-acid chain; its full sequence is Imidazolonepropionase (423 aa).

Fe(3+) contacts are provided by His-78 and His-80. 2 residues coordinate Zn(2+): His-78 and His-80. Residues Arg-87, Tyr-150, and His-183 each coordinate 4-imidazolone-5-propanoate. Tyr-150 contributes to the N-formimidoyl-L-glutamate binding site. His-247 contacts Fe(3+). His-247 contacts Zn(2+). Glu-250 is a 4-imidazolone-5-propanoate binding site. Asp-322 contributes to the Fe(3+) binding site. Asp-322 contributes to the Zn(2+) binding site. N-formimidoyl-L-glutamate contacts are provided by Asn-324 and Gly-326. Position 327 (Ser-327) interacts with 4-imidazolone-5-propanoate.

It belongs to the metallo-dependent hydrolases superfamily. HutI family. Zn(2+) is required as a cofactor. Requires Fe(3+) as cofactor.

Its subcellular location is the cytoplasm. It catalyses the reaction 4-imidazolone-5-propanoate + H2O = N-formimidoyl-L-glutamate. The protein operates within amino-acid degradation; L-histidine degradation into L-glutamate; N-formimidoyl-L-glutamate from L-histidine: step 3/3. Its function is as follows. Catalyzes the hydrolytic cleavage of the carbon-nitrogen bond in imidazolone-5-propanoate to yield N-formimidoyl-L-glutamate. It is the third step in the universal histidine degradation pathway. The polypeptide is Imidazolonepropionase (Bacillus cereus (strain ZK / E33L)).